The sequence spans 269 residues: tRNA pseudouridine synthase A (269 aa).

D51 functions as the Nucleophile in the catalytic mechanism. Y109 contributes to the substrate binding site.

The protein belongs to the tRNA pseudouridine synthase TruA family. In terms of assembly, homodimer.

The enzyme catalyses uridine(38/39/40) in tRNA = pseudouridine(38/39/40) in tRNA. Functionally, formation of pseudouridine at positions 38, 39 and 40 in the anticodon stem and loop of transfer RNAs. The sequence is that of tRNA pseudouridine synthase A from Haemophilus influenzae (strain 86-028NP).